The chain runs to 466 residues: Ribulose bisphosphate carboxylase large chain (466 aa).

K5 bears the N6,N6,N6-trimethyllysine mark. Substrate is bound by residues N114 and T164. K166 (proton acceptor) is an active-site residue. Residue K168 coordinates substrate. Mg(2+) is bound by residues K192, D194, and E195. K192 bears the N6-carboxylysine mark. Residue H285 is the Proton acceptor of the active site. Substrate contacts are provided by R286, H318, and S370.

It belongs to the RuBisCO large chain family. Type I subfamily. Heterohexadecamer of 8 large chains and 8 small chains; disulfide-linked. The disulfide link is formed within the large subunit homodimers. Requires Mg(2+) as cofactor. The disulfide bond which can form in the large chain dimeric partners within the hexadecamer appears to be associated with oxidative stress and protein turnover.

The protein localises to the plastid. It localises to the chloroplast. It carries out the reaction 2 (2R)-3-phosphoglycerate + 2 H(+) = D-ribulose 1,5-bisphosphate + CO2 + H2O. The enzyme catalyses D-ribulose 1,5-bisphosphate + O2 = 2-phosphoglycolate + (2R)-3-phosphoglycerate + 2 H(+). RuBisCO catalyzes two reactions: the carboxylation of D-ribulose 1,5-bisphosphate, the primary event in carbon dioxide fixation, as well as the oxidative fragmentation of the pentose substrate in the photorespiration process. Both reactions occur simultaneously and in competition at the same active site. The chain is Ribulose bisphosphate carboxylase large chain from Isophysis tasmanica.